We begin with the raw amino-acid sequence, 555 residues long: CTP synthase (555 aa).

The segment at 1-277 (MPKEPETEYD…DQHVMERLNV (277 aa)) is amidoligase domain. Serine 26 is a binding site for CTP. Serine 26 provides a ligand contact to UTP. 27 to 32 (GLGKGI) lines the ATP pocket. Position 67 (tyrosine 67) interacts with L-glutamine. Residue aspartate 84 participates in ATP binding. The Mg(2+) site is built by aspartate 84 and glutamate 152. Residues 159–161 (DIE), 198–203 (KTKPTQ), and lysine 234 contribute to the CTP site. UTP-binding positions include 198 to 203 (KTKPTQ) and lysine 234. Positions 307–542 (LVGKYDLEDA…LKSVDSTLDA (236 aa)) constitute a Glutamine amidotransferase type-1 domain. Glycine 364 is a binding site for L-glutamine. Catalysis depends on cysteine 391, which acts as the Nucleophile; for glutamine hydrolysis. Residues 392–395 (LGFQ), glutamate 415, and arginine 472 each bind L-glutamine. Active-site residues include histidine 515 and glutamate 517.

The protein belongs to the CTP synthase family. In terms of assembly, homotetramer.

The enzyme catalyses UTP + L-glutamine + ATP + H2O = CTP + L-glutamate + ADP + phosphate + 2 H(+). It carries out the reaction L-glutamine + H2O = L-glutamate + NH4(+). The catalysed reaction is UTP + NH4(+) + ATP = CTP + ADP + phosphate + 2 H(+). Its pathway is pyrimidine metabolism; CTP biosynthesis via de novo pathway; CTP from UDP: step 2/2. Its activity is regulated as follows. Allosterically activated by GTP, when glutamine is the substrate; GTP has no effect on the reaction when ammonia is the substrate. The allosteric effector GTP functions by stabilizing the protein conformation that binds the tetrahedral intermediate(s) formed during glutamine hydrolysis. Inhibited by the product CTP, via allosteric rather than competitive inhibition. In terms of biological role, catalyzes the ATP-dependent amination of UTP to CTP with either L-glutamine or ammonia as the source of nitrogen. Regulates intracellular CTP levels through interactions with the four ribonucleotide triphosphates. The polypeptide is CTP synthase (Haloquadratum walsbyi (strain DSM 16790 / HBSQ001)).